Reading from the N-terminus, the 181-residue chain is UPF0316 protein Bcer98_2136 (181 aa).

The next 3 helical transmembrane spans lie at 6–26, 32–52, and 58–78; these read LIFV…ILLV, SAAG…GIVF, and WMNI…GGYI.

It belongs to the UPF0316 family.

It is found in the cell membrane. This is UPF0316 protein Bcer98_2136 from Bacillus cytotoxicus (strain DSM 22905 / CIP 110041 / 391-98 / NVH 391-98).